A 444-amino-acid chain; its full sequence is Methylenetetrahydrofolate--tRNA-(uracil-5-)-methyltransferase TrmFO (444 aa).

10–15 (GAGLAG) contacts FAD.

Belongs to the MnmG family. TrmFO subfamily. FAD serves as cofactor.

It localises to the cytoplasm. It carries out the reaction uridine(54) in tRNA + (6R)-5,10-methylene-5,6,7,8-tetrahydrofolate + NADH + H(+) = 5-methyluridine(54) in tRNA + (6S)-5,6,7,8-tetrahydrofolate + NAD(+). It catalyses the reaction uridine(54) in tRNA + (6R)-5,10-methylene-5,6,7,8-tetrahydrofolate + NADPH + H(+) = 5-methyluridine(54) in tRNA + (6S)-5,6,7,8-tetrahydrofolate + NADP(+). Functionally, catalyzes the folate-dependent formation of 5-methyl-uridine at position 54 (M-5-U54) in all tRNAs. This chain is Methylenetetrahydrofolate--tRNA-(uracil-5-)-methyltransferase TrmFO, found in Streptococcus pneumoniae serotype 4 (strain ATCC BAA-334 / TIGR4).